A 502-amino-acid chain; its full sequence is Maturase K (502 aa).

This sequence belongs to the intron maturase 2 family. MatK subfamily.

It localises to the plastid. The protein localises to the chloroplast. Its function is as follows. Usually encoded in the trnK tRNA gene intron. Probably assists in splicing its own and other chloroplast group II introns. This chain is Maturase K, found in Tilia americana (American basswood).